We begin with the raw amino-acid sequence, 335 residues long: tRNA N6-adenosine threonylcarbamoyltransferase (335 aa).

H107 and H111 together coordinate Fe cation. Substrate-binding positions include 129 to 133 (LVSGG), D162, G175, and N268. D296 provides a ligand contact to Fe cation.

It belongs to the KAE1 / TsaD family. The cofactor is Fe(2+).

It localises to the cytoplasm. It catalyses the reaction L-threonylcarbamoyladenylate + adenosine(37) in tRNA = N(6)-L-threonylcarbamoyladenosine(37) in tRNA + AMP + H(+). In terms of biological role, required for the formation of a threonylcarbamoyl group on adenosine at position 37 (t(6)A37) in tRNAs that read codons beginning with adenine. Is involved in the transfer of the threonylcarbamoyl moiety of threonylcarbamoyl-AMP (TC-AMP) to the N6 group of A37, together with TsaE and TsaB. TsaD likely plays a direct catalytic role in this reaction. The sequence is that of tRNA N6-adenosine threonylcarbamoyltransferase from Campylobacter fetus subsp. fetus (strain 82-40).